A 573-amino-acid chain; its full sequence is MVKSTMSAVLLVLHIFVLHLQYSEVQSLANTSSHDFSYLSFVYDATDPELEGSYDYIIVGGGTAGCPLAATLSANYSVLVLERGSLPTEYPNLLISDGFVYNLQQEDDGKTPVERFVSEDGIDNVRGRVLGGTSMINAGVYVRANTSFFNQTGIEWDMDLVNQTYEWVEDTIVFEPDSQTWQTVIGTAYLEAGILPNNGFSVDHLAGTRLTGSTFDNNGTRHASDELLNKGDPNNLRVAVQAAVEKIIFSSNTSGVTAIGVIYTDSNGTTHQAFVRGEGEVILSAGPIGSPQLLLLSGVGPESYLTSLNISVVASHPYVGQYIYDNPRNFINILPPNPIEASTVTVLGITSDFYQCSISSLPFDTPPFSFFPTTSYPLPNQTFAHIVNKVPGPLSHGTVTLNSSSDVRVGPNVKFNYYSNLTDLSHCVSGMKKLGEVLSTDALEPYKVEDLPGIDGFNILGIPLPENQTDDAAFETFCRESVASYWHYHGGCLVGKVLDDGFRVTGINALRVVDGSTFPSTPASHPQGFYLMLGRYMGIQILQERSASEDAIRNLGFQENILDSPKSTSSFAF.

The N-terminal stretch at Met-1–Ser-27 is a signal peptide. The N-linked (GlcNAc...) asparagine glycan is linked to Asn-30. Thr-63–Ala-64 lines the FAD pocket. Asn-75 carries an N-linked (GlcNAc...) asparagine glycan. FAD is bound by residues Glu-82–Arg-83, Val-129, Thr-133, and Asn-137–Val-140. N-linked (GlcNAc...) asparagine glycans are attached at residues Asn-145, Asn-150, Asn-162, and Asn-218. FAD is bound at residue Val-244. N-linked (GlcNAc...) asparagine glycans are attached at residues Asn-252, Asn-267, and Asn-309. Cys-356 contributes to the substrate binding site. 4 N-linked (GlcNAc...) asparagine glycosylation sites follow: Asn-380, Asn-402, Asn-420, and Asn-467. Cysteines 427 and 478 form a disulfide. Substrate is bound at residue Tyr-485. FAD contacts are provided by residues Trp-486–His-487 and Gly-515. The Proton donor role is filled by His-487. Catalysis depends on His-525, which acts as the Proton acceptor. An FAD-binding site is contributed by Pro-526–Gln-527.

Belongs to the GMC oxidoreductase family. As to quaternary structure, monomer. FAD is required as a cofactor.

Its subcellular location is the vacuole. It is found in the aleurone grain. The enzyme catalyses (R)-mandelonitrile = benzaldehyde + hydrogen cyanide. Involved in cyanogenesis, the release of HCN from injured tissues. Catalyzes the stereospecific addition of HCN to a variety of aldehydes in vitro. It is a major seed constituent, and could have the additional role of a storage form for reduced nitrogen. The polypeptide is (R)-mandelonitrile lyase 3 (MDL3) (Prunus serotina (Black cherry)).